The primary structure comprises 171 residues: Replication restart protein PriC (171 aa).

It belongs to the PriC family. In terms of assembly, monomer. Component of the replication restart primosome, which is composed of PriA, PriB, PriC, DnaBe and DnaT; DnaG primase associates transiently with this complex. Interacts with the C-terminus of SSB. SSB interaction is required to load the main replicative helicase onto substrate replication forks. Interacts with helicase DnaB alone and in the DnaB-DnaC complex, probably 1:1 binding with DnaB.

Its function is as follows. Involved in the restart of stalled replication forks, which reloads the DnaB replicative helicase on sites other than the origin of replication. In vitro can load (E.coli) DnaB replicative helicase from a DnaB-DnaC complex on a single-stranded DNA (ssDNA)-binding protein (SSB)-coated stalled replication fork with no leading- or lagging-strand in the absence of other primosome proteins (PriA, PriB or DnaT). Binds SSB (tested with E.coli protein) and ssDNA. Complements priC in an E.coli priB-priC double deletion. In Cronobacter sakazakii (strain ATCC BAA-894) (Enterobacter sakazakii), this protein is Replication restart protein PriC.